A 653-amino-acid polypeptide reads, in one-letter code: Extracellular metalloproteinase (653 aa).

The N-terminal stretch at 1-19 is a signal peptide; the sequence is MRSFLLASLASLSVISVYG. Residues 20 to 244 constitute a propeptide that is removed on maturation; sequence HPHARSTLTR…VHAVVDYSAD (225 aa). N-linked (GlcNAc...) asparagine glycosylation is found at N327, N336, and N412. H429 provides a ligand contact to Zn(2+). The active site involves E430. H433 contributes to the Zn(2+) binding site. Residues N636 and N637 are each glycosylated (N-linked (GlcNAc...) asparagine).

The protein belongs to the peptidase M36 family. Zn(2+) serves as cofactor.

The protein resides in the secreted. In terms of biological role, secreted metalloproteinase that allows assimilation of proteinaceous substrates. This is Extracellular metalloproteinase (MEP) from Pyrenophora tritici-repentis (strain Pt-1C-BFP) (Wheat tan spot fungus).